The sequence spans 490 residues: GTPase Der (490 aa).

One can recognise an EngA-type G 1 domain in the interval 3–166 (PVIALVGRPN…IALSEFPKDD (164 aa)). GTP is bound by residues 9–16 (GRPNVGKS), 56–60 (DTGGI), and 118–121 (NKVD). The interval 164 to 191 (KDDADEPEEGEEEIVAEGEEAKRIPGPS) is disordered. Over residues 166 to 181 (DADEPEEGEEEIVAEG) the composition is skewed to acidic residues. Basic and acidic residues predominate over residues 182 to 191 (EEAKRIPGPS). Residues 196 to 369 (IKIAIIGRPN…SVQNSFKSAV (174 aa)) enclose the EngA-type G 2 domain. Residues 202–209 (GRPNVGKS), 249–253 (DTAGV), and 314–317 (NKWD) contribute to the GTP site. Residues 370–454 (TRWPTSRLTQ…PIRIEFKGGE (85 aa)) enclose the KH-like domain. The disordered stretch occupies residues 452–490 (GGENPYEGNKNTLTDRQVNKKRRLMSHHKKADKKRRDKR). The span at 470 to 490 (NKKRRLMSHHKKADKKRRDKR) shows a compositional bias: basic residues.

This sequence belongs to the TRAFAC class TrmE-Era-EngA-EngB-Septin-like GTPase superfamily. EngA (Der) GTPase family. As to quaternary structure, associates with the 50S ribosomal subunit.

Functionally, GTPase that plays an essential role in the late steps of ribosome biogenesis. This Pseudomonas fluorescens (strain ATCC BAA-477 / NRRL B-23932 / Pf-5) protein is GTPase Der.